A 172-amino-acid chain; its full sequence is Acetolactate synthase small subunit (172 aa).

Residues 4-78 (TLSVLVEDEA…NVIKVQDITE (75 aa)) form the ACT domain.

Belongs to the acetolactate synthase small subunit family. As to quaternary structure, dimer of large and small chains.

The catalysed reaction is 2 pyruvate + H(+) = (2S)-2-acetolactate + CO2. Its pathway is amino-acid biosynthesis; L-isoleucine biosynthesis; L-isoleucine from 2-oxobutanoate: step 1/4. It functions in the pathway amino-acid biosynthesis; L-valine biosynthesis; L-valine from pyruvate: step 1/4. In Synechocystis sp. (strain ATCC 27184 / PCC 6803 / Kazusa), this protein is Acetolactate synthase small subunit (ilvH).